The primary structure comprises 1164 residues: Receptor-like protein kinase BRI1-like 3 (1164 aa).

Positions methionine 1 to glycine 23 are cleaved as a signal peptide. Residues arginine 24–serine 772 are Extracellular-facing. An N-linked (GlcNAc...) asparagine glycan is attached at asparagine 32. Residues cysteine 65–cysteine 72 carry the Cys pair 1 motif. 20 LRR repeats span residues arginine 77–threonine 98, asparagine 102–glycine 123, serine 125–phenylalanine 146, asparagine 151–serine 173, arginine 176–alanine 197, serine 202–leucine 224, asparagine 227–serine 248, leucine 252–glycine 274, asparagine 278–leucine 300, threonine 303–cysteine 325, serine 327–valine 347, arginine 352–serine 375, asparagine 376–serine 397, valine 403–lysine 424, serine 427–threonine 448, lysine 451–aspartate 473, asparagine 476–cysteine 498, asparagine 500–glutamate 523, lysine 524–cysteine 546, and asparagine 548–glutamine 570. Residues asparagine 96 and asparagine 112 are each glycosylated (N-linked (GlcNAc...) asparagine). N-linked (GlcNAc...) asparagine glycosylation occurs at asparagine 156. Residues asparagine 212, asparagine 227, and asparagine 257 are each glycosylated (N-linked (GlcNAc...) asparagine). Residues asparagine 362 and asparagine 373 are each glycosylated (N-linked (GlcNAc...) asparagine). Asparagine 461 carries an N-linked (GlcNAc...) asparagine glycan. Asparagine 532, asparagine 558, and asparagine 638 each carry an N-linked (GlcNAc...) asparagine glycan. 4 LRR repeats span residues serine 640–methionine 662, tyrosine 664–leucine 686, alanine 688–serine 711, and phenylalanine 712–threonine 734. 2 N-linked (GlcNAc...) asparagine glycosylation sites follow: asparagine 722 and asparagine 743. Residues cysteine 748–cysteine 755 carry the Cys pair 2 motif. The helical transmembrane segment at isoleucine 773–methionine 793 threads the bilayer. Residues alanine 794–proline 1164 lie on the Cytoplasmic side of the membrane. Residues threonine 847 and threonine 855 each carry the phosphothreonine modification. One can recognise a Protein kinase domain in the interval phenylalanine 858–valine 1136. Residues isoleucine 864–valine 872 and lysine 886 each bind ATP. The residue at position 931 (tyrosine 931) is a Phosphotyrosine. Aspartate 985 (proton acceptor) is an active-site residue. Serine 1020 is modified (phosphoserine). Tyrosine 1028 carries the phosphotyrosine modification.

It belongs to the protein kinase superfamily. Ser/Thr protein kinase family. Post-translationally, autophosphorylated on Tyr and Thr residues. Predominantly expressed in vascular tissues. Expressed only during postembryonic development with a very discrete pattern of expression, preferentially in the two protophloem cell files at the elongation zone of the root. The expression in these two cell files attenuates as the phloem cells differentiate in the upper root. In cotyledons and leaves, it is expressed in phloem cells, starting at the cotyledons and shoot apex, moving toward the basal part of the leaves, where the expression is weak. Expressed in the secondary and tertiary veins and in the upper part of the cotyledons and leaves. Weakly or not expressed in the inflorescence stems. Has some complementary expression with BRL1.

The protein localises to the cell membrane. The enzyme catalyses L-seryl-[protein] + ATP = O-phospho-L-seryl-[protein] + ADP + H(+). It carries out the reaction L-threonyl-[protein] + ATP = O-phospho-L-threonyl-[protein] + ADP + H(+). The catalysed reaction is L-tyrosyl-[protein] + ATP = O-phospho-L-tyrosyl-[protein] + ADP + H(+). Functionally, receptor with a dual specificity kinase activity acting on both serine/threonine- and tyrosine-containing substrates. Binds brassinolide. Regulates, in response to brassinosteroid binding, a signaling cascade involved in plant development. May be involved in cell growth and vascular differentiation. This Arabidopsis thaliana (Mouse-ear cress) protein is Receptor-like protein kinase BRI1-like 3 (BRL3).